The following is a 101-amino-acid chain: Small ribosomal subunit protein uS10 (101 aa).

This sequence belongs to the universal ribosomal protein uS10 family. In terms of assembly, part of the 30S ribosomal subunit.

Involved in the binding of tRNA to the ribosomes. This chain is Small ribosomal subunit protein uS10, found in Corynebacterium aurimucosum (strain ATCC 700975 / DSM 44827 / CIP 107346 / CN-1) (Corynebacterium nigricans).